The chain runs to 603 residues: Coiled-coil domain-containing protein 148 (603 aa).

2 coiled-coil regions span residues 365-429 (LAKD…KKKK) and 461-510 (EQSL…KQVA).

This is Coiled-coil domain-containing protein 148 (CCDC148) from Macaca fascicularis (Crab-eating macaque).